The primary structure comprises 705 residues: Elongation factor G (705 aa).

Residues Glu8–Asn290 form the tr-type G domain. Residues Ala17–Thr24, Asp88–His92, and Asn142–Asp145 each bind GTP.

This sequence belongs to the TRAFAC class translation factor GTPase superfamily. Classic translation factor GTPase family. EF-G/EF-2 subfamily.

It localises to the cytoplasm. Its function is as follows. Catalyzes the GTP-dependent ribosomal translocation step during translation elongation. During this step, the ribosome changes from the pre-translocational (PRE) to the post-translocational (POST) state as the newly formed A-site-bound peptidyl-tRNA and P-site-bound deacylated tRNA move to the P and E sites, respectively. Catalyzes the coordinated movement of the two tRNA molecules, the mRNA and conformational changes in the ribosome. The protein is Elongation factor G of Francisella philomiragia subsp. philomiragia (strain ATCC 25017 / CCUG 19701 / FSC 153 / O#319-036).